The following is a 375-amino-acid chain: Trans-enoyl reductase iccB (375 aa).

48–51 (VDAK) contributes to the NADP(+) binding site. 143 to 150 (AAVATVGL) contacts substrate. Residues 204–207 (SSAS), Tyr-222, and 269–270 (LD) each bind NADP(+). A substrate-binding site is contributed by 289 to 293 (TYSQF). Position 358–359 (358–359 (IK)) interacts with NADP(+).

It belongs to the zinc-containing alcohol dehydrogenase family. In terms of assembly, monomer.

It catalyses the reaction N-[(4E,6E,10S,12Z,14E)-6,10-dimethyl-3-oxohexadeca-4,6,12,14-tetraenoyl]-L-tyrosyl-[ACP] = (3E,5S)-3-[(2E,4E,8S,10E,12Z)-1-hydroxy-4,8-dimethyltetradeca-2,4,10,12-tetraen-1-ylidene]-5-[(4-hydroxyphenyl)methyl]pyrrolidine-2,4-dione + holo-[ACP] + H(+). It functions in the pathway mycotoxin biosynthesis. Trans-enoyl reductase; part of the gene cluster that mediates the biosynthesis of ilicicolin H, a 4-hydroxy-2-pyridonealkaloid that has potent and broad antifungal activities by inhibiting the mitochondrial respiration chain. IccB collaborates with the hybrid PKS-NRPS synthetase iccA to assemble the backbone of ilicicolin H. The PKS portion of iccA and trans-acting enoyl reductase iccB work together to construct an octaketide, and two methyl groups are introduced by the MT domain of iccA during the chain assembly. The nascent chain is then condensed with tyrosine, catalyzed by the iliA C domain, and the resulting PKS-NRPS hybrid is offloaded by the iliA RED domain to form an advanced tetramic acid intermediate. The biosynthesis of ilicicolin H starts with formation of the tetramic acid by the hybrid PKS-NRPS synthetase iccA with the partnering trans-enoyl reductase iccB since iccA lacks a designated enoylreductase (ER) domain. The cytochrome P450 monooxygenase iccC then catalyzes the ring expansion of the tetramate to the acyclic 2-pyridone. The pericyclase iccD further converts the acyclic 2-pyridone into 8-epi-ilicicolin H. Finally, the epimerase iccE converts 8-epi-ilicicolin H into ilicicolin H via epimerization. IccA to iccE are sufficient for ilicicolin H biosynthesis and the roles of the remaining enzymes, iccF, iccG and iccH within the pathway have still to be determined. The sequence is that of Trans-enoyl reductase iccB from Talaromyces variabilis (Penicillium variabile).